The chain runs to 143 residues: Brain ribonuclease (143 aa).

Residues 1-21 (KESAAAKFRRQHMDSGSSSSG) are disordered. Lys-7 and Arg-10 together coordinate substrate. Catalysis depends on His-12, which acts as the Proton acceptor. 4 disulfide bridges follow: Cys-26–Cys-84, Cys-40–Cys-95, Cys-58–Cys-110, and Cys-65–Cys-72. 41 to 45 (KPVNT) is a binding site for substrate. An N-linked (GlcNAc...) asparagine glycan is attached at Asn-62. Positions 66 and 85 each coordinate substrate. The Proton donor role is filled by His-119. Thr-129 carries O-linked (GalNAc...) threonine glycosylation. Ser-133 is a glycosylation site (O-linked (GalNAc...) serine).

It belongs to the pancreatic ribonuclease family.

It is found in the secreted. This is Brain ribonuclease (BRN) from Ovis aries (Sheep).